A 696-amino-acid polypeptide reads, in one-letter code: SEC14 domain and spectrin repeat-containing protein 1 (696 aa).

Positions Met-1–His-153 constitute a CRAL-TRIO domain. Spectrin repeat units lie at residues Thr-272 to Gln-378, Leu-381 to Leu-494, and Phe-500 to Glu-602.

It belongs to the SOLO family.

Functionally, may act as the primary docking protein directing membrane turnover and assembly of the transient receptor potential channels trpc4 and trpc5. Binds phospholipids. In Xenopus tropicalis (Western clawed frog), this protein is SEC14 domain and spectrin repeat-containing protein 1 (sestd1).